The following is a 402-amino-acid chain: N-acetyltransferase Eis (402 aa).

In terms of domain architecture, N-acetyltransferase spans 3–154 (VTLCSPTEDD…RFARFHADAP (152 aa)). Acetyl-CoA is bound by residues 85 to 87 (VAV), 93 to 98 (RRGLLR), and 121 to 122 (SE). Residue tyrosine 126 is the Proton donor of the active site. Phenylalanine 402 functions as the Proton acceptor; via carboxylate in the catalytic mechanism.

Belongs to the acetyltransferase Eis family. As to quaternary structure, homohexamer; trimer of dimers.

Its subcellular location is the secreted. It localises to the host cytoplasmic vesicle. The protein resides in the host phagosome. It is found in the extracellular vesicle. The protein localises to the bacterial extracellular vesicle. Its subcellular location is the host extracellular space. It carries out the reaction L-lysyl-[protein] + acetyl-CoA = N(6)-acetyl-L-lysyl-[protein] + CoA + H(+). In terms of biological role, effector that is released into the host cell and affects host immune responses. Acts as an acetyltransferase that acetylates lysine residues of host proteins. This Mycobacterium bovis (strain ATCC BAA-935 / AF2122/97) protein is N-acetyltransferase Eis.